Reading from the N-terminus, the 236-residue chain is Sensory rhodopsin I (236 aa).

7 consecutive transmembrane segments (helical) span residues 6–26, 37–57, 74–94, 98–118, 126–146, 167–187, and 192–212; these read VVYG…GFLY, ILAA…AMVF, YLDW…TAGA, AIFG…GAVV, ALFG…YLIF, VGLL…GLGF, and GVSI…VYFF. Lys205 carries the post-translational modification N6-(retinylidene)lysine.

Belongs to the archaeal/bacterial/fungal opsin family. In terms of assembly, interacts with Htr1. In terms of processing, the covalent binding of retinal to the apoprotein, bacterioopsin, generates bacteriorhodopsin.

It localises to the membrane. Its function is as follows. Photoattractant rhodopsin. In Haloarcula marismortui (strain ATCC 43049 / DSM 3752 / JCM 8966 / VKM B-1809) (Halobacterium marismortui), this protein is Sensory rhodopsin I (sop1).